The following is a 140-amino-acid chain: Gonadotropin subunit beta-2 (140 aa).

A signal peptide spans 1 to 24 (MSVYPECTWLLFVCLCHLLVSAGG). 6 disulfide bridges follow: Cys-30–Cys-78, Cys-44–Cys-93, Cys-47–Cys-131, Cys-55–Cys-109, Cys-59–Cys-111, and Cys-114–Cys-121. N-linked (GlcNAc...) asparagine glycosylation is present at Asn-34.

It belongs to the glycoprotein hormones subunit beta family. In terms of assembly, heterodimer of an alpha and a beta chain.

Its subcellular location is the secreted. In terms of biological role, involved in gametogenesis and steroidogenesis. This chain is Gonadotropin subunit beta-2 (cgbb), found in Anguilla anguilla (European freshwater eel).